The following is a 171-amino-acid chain: Lipoprotein signal peptidase (171 aa).

A run of 4 helical transmembrane segments spans residues 15–35 (WLWL…IVMD), 47–67 (VLPF…SFLS), 72–92 (WQRW…AYWM), and 107–127 (ALII…GFVV). Active-site residues include Asp128 and Asp146. A helical membrane pass occupies residues 141–161 (AFNLADSTICIGAAMIILDGF).

The protein belongs to the peptidase A8 family.

The protein localises to the cell inner membrane. The enzyme catalyses Release of signal peptides from bacterial membrane prolipoproteins. Hydrolyzes -Xaa-Yaa-Zaa-|-(S,diacylglyceryl)Cys-, in which Xaa is hydrophobic (preferably Leu), and Yaa (Ala or Ser) and Zaa (Gly or Ala) have small, neutral side chains.. It functions in the pathway protein modification; lipoprotein biosynthesis (signal peptide cleavage). Its function is as follows. This protein specifically catalyzes the removal of signal peptides from prolipoproteins. The protein is Lipoprotein signal peptidase of Vibrio cholerae serotype O1 (strain ATCC 39541 / Classical Ogawa 395 / O395).